Reading from the N-terminus, the 148-residue chain is Endoribonuclease YbeY (148 aa).

Residues His-113, His-117, and His-123 each coordinate Zn(2+).

Belongs to the endoribonuclease YbeY family. Zn(2+) is required as a cofactor.

The protein resides in the cytoplasm. Functionally, single strand-specific metallo-endoribonuclease involved in late-stage 70S ribosome quality control and in maturation of the 3' terminus of the 16S rRNA. This Borrelia turicatae (strain 91E135) protein is Endoribonuclease YbeY.